The sequence spans 123 residues: Large ribosomal subunit protein bL12 (123 aa).

Belongs to the bacterial ribosomal protein bL12 family. As to quaternary structure, homodimer. Part of the ribosomal stalk of the 50S ribosomal subunit. Forms a multimeric L10(L12)X complex, where L10 forms an elongated spine to which 2 to 4 L12 dimers bind in a sequential fashion. Binds GTP-bound translation factors.

Its function is as follows. Forms part of the ribosomal stalk which helps the ribosome interact with GTP-bound translation factors. Is thus essential for accurate translation. This chain is Large ribosomal subunit protein bL12, found in Dechloromonas aromatica (strain RCB).